We begin with the raw amino-acid sequence, 750 residues long: Photosystem I P700 chlorophyll a apoprotein A1 (750 aa).

The next 8 membrane-spanning stretches (helical) occupy residues valine 70–alanine 93, leucine 156–histidine 179, leucine 195–leucine 219, isoleucine 291–tyrosine 309, tryptophan 346–tyrosine 369, leucine 385–valine 411, alanine 433–histidine 455, and phenylalanine 531–leucine 549. The [4Fe-4S] cluster site is built by cysteine 573 and cysteine 582. 2 helical membrane passes run histidine 589–tryptophan 610 and leucine 664–phenylalanine 686. Histidine 675 is a binding site for chlorophyll a'. Residues methionine 683 and tyrosine 691 each contribute to the chlorophyll a site. Phylloquinone is bound at residue tryptophan 692. The helical transmembrane segment at alanine 724 to alanine 744 threads the bilayer.

The protein belongs to the PsaA/PsaB family. The PsaA/B heterodimer binds the P700 chlorophyll special pair and subsequent electron acceptors. PSI consists of a core antenna complex that captures photons, and an electron transfer chain that converts photonic excitation into a charge separation. The eukaryotic PSI reaction center is composed of at least 11 subunits. It depends on P700 is a chlorophyll a/chlorophyll a' dimer, A0 is one or more chlorophyll a, A1 is one or both phylloquinones and FX is a shared 4Fe-4S iron-sulfur center. as a cofactor.

It localises to the plastid. Its subcellular location is the chloroplast thylakoid membrane. The enzyme catalyses reduced [plastocyanin] + hnu + oxidized [2Fe-2S]-[ferredoxin] = oxidized [plastocyanin] + reduced [2Fe-2S]-[ferredoxin]. In terms of biological role, psaA and PsaB bind P700, the primary electron donor of photosystem I (PSI), as well as the electron acceptors A0, A1 and FX. PSI is a plastocyanin-ferredoxin oxidoreductase, converting photonic excitation into a charge separation, which transfers an electron from the donor P700 chlorophyll pair to the spectroscopically characterized acceptors A0, A1, FX, FA and FB in turn. Oxidized P700 is reduced on the lumenal side of the thylakoid membrane by plastocyanin. The protein is Photosystem I P700 chlorophyll a apoprotein A1 of Morus indica (Mulberry).